A 617-amino-acid polypeptide reads, in one-letter code: Leucine aminopeptidase 2 (617 aa).

A peptide-binding positions include 139 to 141 (QCQ) and 271 to 276 (PYGGME). Histidine 300 lines the Zn(2+) pocket. Glutamate 301 acts as the Proton acceptor in catalysis. 2 residues coordinate Zn(2+): histidine 304 and glutamate 323. Catalysis depends on tyrosine 388, which acts as the Proton donor.

It belongs to the peptidase M1 family. It depends on Zn(2+) as a cofactor.

It localises to the cytoplasm. The protein localises to the nucleus. The enzyme catalyses an epoxide + H2O = an ethanediol. Aminopeptidase that preferentially cleaves di- and tripeptides. Also has low epoxide hydrolase activity (in vitro). Can hydrolyze the epoxide leukotriene LTA(4) but it forms preferentially 5,6-dihydroxy-7,9,11,14-eicosatetraenoic acid rather than the cytokine leukotriene B(4) as the product compared to the homologous mammalian enzyme (in vitro). The sequence is that of Leucine aminopeptidase 2 from Aspergillus terreus (strain NIH 2624 / FGSC A1156).